We begin with the raw amino-acid sequence, 448 residues long: Glutamyl-tRNA reductase (448 aa).

Residues 48 to 51 (TCNR), S100, 105 to 107 (EDQ), and Q111 contribute to the substrate site. Catalysis depends on C49, which acts as the Nucleophile. 180 to 185 (GAGEIG) contacts NADP(+).

The protein belongs to the glutamyl-tRNA reductase family. Homodimer.

The catalysed reaction is (S)-4-amino-5-oxopentanoate + tRNA(Glu) + NADP(+) = L-glutamyl-tRNA(Glu) + NADPH + H(+). The protein operates within porphyrin-containing compound metabolism; protoporphyrin-IX biosynthesis; 5-aminolevulinate from L-glutamyl-tRNA(Glu): step 1/2. Its function is as follows. Catalyzes the NADPH-dependent reduction of glutamyl-tRNA(Glu) to glutamate 1-semialdehyde (GSA). This is Glutamyl-tRNA reductase from Methanosarcina mazei (strain ATCC BAA-159 / DSM 3647 / Goe1 / Go1 / JCM 11833 / OCM 88) (Methanosarcina frisia).